The following is a 343-amino-acid chain: N-acetyl-gamma-glutamyl-phosphate reductase (343 aa).

Residue cysteine 149 is part of the active site.

It belongs to the NAGSA dehydrogenase family. Type 1 subfamily.

The protein localises to the cytoplasm. It catalyses the reaction N-acetyl-L-glutamate 5-semialdehyde + phosphate + NADP(+) = N-acetyl-L-glutamyl 5-phosphate + NADPH + H(+). It functions in the pathway amino-acid biosynthesis; L-arginine biosynthesis; N(2)-acetyl-L-ornithine from L-glutamate: step 3/4. Functionally, catalyzes the NADPH-dependent reduction of N-acetyl-5-glutamyl phosphate to yield N-acetyl-L-glutamate 5-semialdehyde. The polypeptide is N-acetyl-gamma-glutamyl-phosphate reductase (Methanococcus maripaludis (strain C7 / ATCC BAA-1331)).